The following is a 127-amino-acid chain: Large ribosomal subunit protein uL22 (127 aa).

Belongs to the universal ribosomal protein uL22 family. As to quaternary structure, part of the 50S ribosomal subunit.

This protein binds specifically to 23S rRNA; its binding is stimulated by other ribosomal proteins, e.g. L4, L17, and L20. It is important during the early stages of 50S assembly. It makes multiple contacts with different domains of the 23S rRNA in the assembled 50S subunit and ribosome. Its function is as follows. The globular domain of the protein is located near the polypeptide exit tunnel on the outside of the subunit, while an extended beta-hairpin is found that lines the wall of the exit tunnel in the center of the 70S ribosome. This chain is Large ribosomal subunit protein uL22, found in Methylobacterium sp. (strain 4-46).